A 593-amino-acid chain; its full sequence is Arylsulfatase D (593 aa).

Residues 1 to 33 form the signal peptide; it reads MRSAARRGRAAPAARDSLPVLLFLCLLLKTCEP. D49 and D50 together coordinate Ca(2+). A glycan (N-linked (GlcNAc...) asparagine) is linked at N61. C89 contributes to the Ca(2+) binding site. The active-site Nucleophile is C89. A 3-oxoalanine (Cys) modification is found at C89. Residue N128 is glycosylated (N-linked (GlcNAc...) asparagine). K148 contacts substrate. Residue H150 is part of the active site. H304 is a substrate binding site. N-linked (GlcNAc...) asparagine glycosylation occurs at N347. The Ca(2+) site is built by D356 and H357. Position 381 (K381) interacts with substrate.

The protein belongs to the sulfatase family. Ca(2+) is required as a cofactor. The conversion to 3-oxoalanine (also known as C-formylglycine, FGly), of a serine or cysteine residue in prokaryotes and of a cysteine residue in eukaryotes, is critical for catalytic activity. In terms of tissue distribution, expressed in the pancreas, kidney, liver, lung, placenta, brain and heart.

The protein resides in the lysosome. The polypeptide is Arylsulfatase D (ARSD) (Homo sapiens (Human)).